Reading from the N-terminus, the 220-residue chain is Phosphoribosylformylglycinamidine synthase subunit PurQ (220 aa).

The Glutamine amidotransferase type-1 domain occupies 2 to 220 (RVGVVVFPGS…LRSVLAGAKV (219 aa)). Cys85 serves as the catalytic Nucleophile. Active-site residues include His193 and Glu195.

Part of the FGAM synthase complex composed of 1 PurL, 1 PurQ and 2 PurS subunits.

The protein localises to the cytoplasm. The catalysed reaction is N(2)-formyl-N(1)-(5-phospho-beta-D-ribosyl)glycinamide + L-glutamine + ATP + H2O = 2-formamido-N(1)-(5-O-phospho-beta-D-ribosyl)acetamidine + L-glutamate + ADP + phosphate + H(+). It catalyses the reaction L-glutamine + H2O = L-glutamate + NH4(+). It participates in purine metabolism; IMP biosynthesis via de novo pathway; 5-amino-1-(5-phospho-D-ribosyl)imidazole from N(2)-formyl-N(1)-(5-phospho-D-ribosyl)glycinamide: step 1/2. Functionally, part of the phosphoribosylformylglycinamidine synthase complex involved in the purines biosynthetic pathway. Catalyzes the ATP-dependent conversion of formylglycinamide ribonucleotide (FGAR) and glutamine to yield formylglycinamidine ribonucleotide (FGAM) and glutamate. The FGAM synthase complex is composed of three subunits. PurQ produces an ammonia molecule by converting glutamine to glutamate. PurL transfers the ammonia molecule to FGAR to form FGAM in an ATP-dependent manner. PurS interacts with PurQ and PurL and is thought to assist in the transfer of the ammonia molecule from PurQ to PurL. The protein is Phosphoribosylformylglycinamidine synthase subunit PurQ of Rubrobacter xylanophilus (strain DSM 9941 / JCM 11954 / NBRC 16129 / PRD-1).